Here is a 243-residue protein sequence, read N- to C-terminus: Voltage-gated monoatomic cation channel TMEM109 (243 aa).

An N-terminal signal peptide occupies residues 1–33; sequence MAASSISSPWGKHVFKAILMVLVALILLHSALA. Topologically, residues 34 to 83 are lumenal; the sequence is QSRRDFAPPGQQKREAPVDVLTQIGRSVRGTLDAWIGPETMHLVSESSSQ. The helical transmembrane segment at 84 to 104 threads the bilayer; the sequence is VLWAISSAISVAFFALSGIAA. The Cytoplasmic portion of the chain corresponds to 105-135; that stretch reads QLLNALGLAGDYLAQGLKLSPGQVQTFLLWG. The chain crosses the membrane as a helical span at residues 136 to 156; sequence AGALVVYWLLSLLLGLVLALL. The Lumenal portion of the chain corresponds to 157–185; the sequence is GRILWGLKLVIFLAGFVALMRSVPDPSTR. Residues 186 to 205 form a helical membrane-spanning segment; sequence ALLLLALLILYALLSRLTGS. Topologically, residues 206–243 are cytoplasmic; it reads RASGAQLEAKVRGLERQVEELRWRQRRAAKGARSVEEE.

Homooligomer. Interacts with CRYAB; in the cellular response to DNA damage.

It is found in the nucleus outer membrane. It localises to the endoplasmic reticulum membrane. Its subcellular location is the sarcoplasmic reticulum membrane. The enzyme catalyses K(+)(in) = K(+)(out). It catalyses the reaction Ca(2+)(in) = Ca(2+)(out). In terms of biological role, functions as a voltage-gated monoatomic cation channel permeable to both potassium and calcium. Plays a role in the cellular response to DNA damage. This chain is Voltage-gated monoatomic cation channel TMEM109, found in Homo sapiens (Human).